Reading from the N-terminus, the 404-residue chain is CCA-adding enzyme (404 aa).

The ATP site is built by Gly27 and Arg30. Positions 27 and 30 each coordinate CTP. Mg(2+)-binding residues include Asp40 and Asp42. The ATP site is built by Arg111, Asp154, Arg157, Arg160, and Arg163. CTP is bound by residues Arg111, Asp154, Arg157, Arg160, and Arg163.

Belongs to the tRNA nucleotidyltransferase/poly(A) polymerase family. Bacterial CCA-adding enzyme type 3 subfamily. Homodimer. Mg(2+) serves as cofactor.

It carries out the reaction a tRNA precursor + 2 CTP + ATP = a tRNA with a 3' CCA end + 3 diphosphate. It catalyses the reaction a tRNA with a 3' CCA end + 2 CTP + ATP = a tRNA with a 3' CCACCA end + 3 diphosphate. Functionally, catalyzes the addition and repair of the essential 3'-terminal CCA sequence in tRNAs without using a nucleic acid template. Adds these three nucleotides in the order of C, C, and A to the tRNA nucleotide-73, using CTP and ATP as substrates and producing inorganic pyrophosphate. tRNA 3'-terminal CCA addition is required both for tRNA processing and repair. Also involved in tRNA surveillance by mediating tandem CCA addition to generate a CCACCA at the 3' terminus of unstable tRNAs. While stable tRNAs receive only 3'-terminal CCA, unstable tRNAs are marked with CCACCA and rapidly degraded. This Geobacillus sp. (strain WCH70) protein is CCA-adding enzyme.